Here is a 474-residue protein sequence, read N- to C-terminus: Pyoverdine export outer membrane protein OpmQ (474 aa).

Positions 1–17 are cleaved as a signal peptide; it reads MSMKNLSLISACLLLGA. C18 is lipidated: N-palmitoyl cysteine. The S-diacylglycerol cysteine moiety is linked to residue C18.

The protein belongs to the outer membrane factor (OMF) (TC 1.B.17) family. In terms of assembly, part of the tripartite efflux system PvdRT-OpmQ, which is composed of an inner membrane component with both ATPase and permease domains, PvdT, a periplasmic membrane fusion protein, PvdR, and an outer membrane component, OpmQ.

It is found in the cell outer membrane. Its function is as follows. Part of the tripartite efflux system PvdRT-OpmQ required for the secretion into the extracellular milieu of the siderophore pyoverdine (PVD), which is involved in iron acquisition. The system is responsible for export of newly synthesized PVD after the final steps of biosynthesis have taken place in the periplasm. It is also responsible for recycling of PVD after internalization of ferri-PVD into the periplasm by the outer-membrane receptor FpvA and release of iron from PVD, thus making PVD available for new cycles of iron uptake. In addition, can expel unwanted metals complexed with PVD from the periplasm into the extracellular medium. The polypeptide is Pyoverdine export outer membrane protein OpmQ (Pseudomonas aeruginosa (strain ATCC 15692 / DSM 22644 / CIP 104116 / JCM 14847 / LMG 12228 / 1C / PRS 101 / PAO1)).